Consider the following 73-residue polypeptide: RNA-binding protein Hfq (73 aa).

The 61-residue stretch at 8 to 68 (DQFLNQIRKE…ISTFAPQKNV (61 aa)) folds into the Sm domain.

This sequence belongs to the Hfq family. As to quaternary structure, homohexamer.

RNA chaperone that binds small regulatory RNA (sRNAs) and mRNAs to facilitate mRNA translational regulation in response to envelope stress, environmental stress and changes in metabolite concentrations. Also binds with high specificity to tRNAs. This is RNA-binding protein Hfq from Bacillus licheniformis (strain ATCC 14580 / DSM 13 / JCM 2505 / CCUG 7422 / NBRC 12200 / NCIMB 9375 / NCTC 10341 / NRRL NRS-1264 / Gibson 46).